Reading from the N-terminus, the 608-residue chain is Granule-bound starch synthase 1, chloroplastic/amyloplastic (608 aa).

The N-terminal 76 residues, M1–V76, are a transit peptide targeting the chloroplast. K96 lines the ADP-alpha-D-glucose pocket.

It belongs to the glycosyltransferase 1 family. Bacterial/plant glycogen synthase subfamily.

It localises to the plastid. It is found in the chloroplast. The protein localises to the amyloplast. The enzyme catalyses an NDP-alpha-D-glucose + [(1-&gt;4)-alpha-D-glucosyl](n) = [(1-&gt;4)-alpha-D-glucosyl](n+1) + a ribonucleoside 5'-diphosphate + H(+). The protein operates within glycan biosynthesis; starch biosynthesis. Functionally, required for the synthesis of amylose. The chain is Granule-bound starch synthase 1, chloroplastic/amyloplastic (WAXY) from Ipomoea batatas (Sweet potato).